A 1771-amino-acid chain; its full sequence is MDFTPSTGTPGEFRRMKLTYFTNEFPSDDLPGLARQLHLHSKDRRHHILARFLQDATLAIREEVAQLPPALKDLLPPFESVLTFVEYPEMRKGPLCGSIDGVLLSTVELATFIGYFEEFPETYDFESAHTYLAGLGIGLLSAAAVSLSRTLADIAYVGSEVVRMAFRLGVLVDNVSEQLQPRELASHGTPDSWAYVLPNVTREAVQQELDVIHSGEGIPETGKIFVSAFSQSSVTVSGPPSRLKDLFRTSDFFRDRRFFSLPVFGGLCHAKHIYTETHVQQVVRTKPMDMLSARVLPRIPIFSPSSGSPFPAATATELFEGIISEILTQVIQWDNVIQGALDQINILSPSEFQVLVFRISLPIHDLMAAVNTELKGFQATTKEIMPWVSHTAKDRIPREPSQSKIAIVGMSCRLPGGATNTEKFWDVLEQGLDVYRTIPPDRFDVNTHYDPAGKRVNASHTPYGCFIEEPGLFDAPFFNMSPREAQQTDPMQRLALVTAYEALERAGYVPNRTPATNKHRIGTFYGQASDDYREVNTAQDVDTYFITGGCRAFGPGRINYFFKFWGPSYSIDTACSSSLATVEAACTSLWNGSTDTAVVGGVNVLTNSDAFAGLSRGHFLSKIPGACKTWDCNADGYCRADGVISLVMKRLEDAQADNDNILGVILGAATNHSADAVSITHPHAGAQAHLFRDVLRNAGVDSHDVSYVELHGTGTQAGDFEEMKSVTDVFAPLTKRRSPNQPLYVGAVKANVGHGEAVAGVTALLKVLLMLQKSVIPPHVGIKNSINPQIPKDLDKRNLHIPYEKQSWKSTPGKSRIAVVNNFSAAGGNTSVVLEEGPVTELTGVDPRPSHVVAISAKSKVSLKGNLERFAAYIDTNPGVSLSHLSYTTMARRHHHNHRLAAAVSDAEQLKKQLTSWMQSVESHRPISATGPPPVAFAFTGQGASYKSMNVELFHTLPSFREQMMHLDALAQQQGFPSFIPAIDGSHPQDHAHSQVVTQLALTGTQIALAKYWMSLGVRPEVVVGHSLGEFAALHIAGVLSAGDTLFLVGRRAQLLEQHCVQGSYQMLAVRASVSQIEEIADGRLYEVACINGPKETVLSGTRQEIRNIAEHLMTKGYKCTALEVAFAGHSAQLDPILDTYEQIATKGAIFHPPNLPIISPLLGKVIFDDKTVNATYMRRASRETVNFHAALETAQRISTVDDTTAWVEIGPHPVCMGFIRSTLQSTALTVPSLRRGEESWVTITRSLSSLHCAGVEVHWNEFHRPFEQALRLLDLPTYSWNDKNYWIQYNGDWALTKGNTFYSSQQQNSAAVDELPSGPRTSTVQKIVEESFDGRAARVVMQSDLMQSDLLEAAYGHKMNGCGVVTSSIHADVGFTLGQYVYKKLNPNTKVPAMNMASLEVLKGLVANKNTDKPQRFQVTVTTTDINSRILQLEWRNVHAHGPAEEPFASAKIYYCDASEWLLSWRPTLHLVQGRIQALERLAEAGIANRFSGRMAYNLFANSLVDYAGKYRGMQSVVMHELEAFADVTLTVEKAGTWTVPPYFIDSVAHLAGFIMNVSDAIDNQKNFCVTPGWNSMRFAAPLVAGGRYRSYVKMIPTVEDDSVYLGDVYILQNDMIIGMVGGIKFRRYPRLLLNRFFSPSDDSTAKTAAGETPPAPTTTAATAITAATSTTSTTSTASTGQPPKVDETSPVDSNSTAARALALVAKEAGMEVTDLQDDAIFANLGVDSLMSLVIAEKFREELGVVVAGSLFLEYPTVGDLKSWLLEYYS.

The N-terminal acylcarrier protein transacylase domain (SAT) stretch occupies residues His38–His269. The Ketosynthase family 3 (KS3) domain maps to Gln402 to Glu836. Residues Cys575, His711, and His754 each act as for beta-ketoacyl synthase activity in the active site. The segment at Phe937 to Glu1257 is malonyl-CoA:ACP transacylase (MAT) domain. The segment at Thr1322–Pro1641 is product template (PT) domain. Residues Gln1326–Glu1461 are N-terminal hotdog fold. Positions Gln1326 to Asn1636 constitute a PKS/mFAS DH domain. His1358 serves as the catalytic Proton acceptor; for dehydratase activity. Residues Ile1488–Asn1636 form a C-terminal hotdog fold region. Asp1547 (proton donor; for dehydratase activity) is an active-site residue. Low complexity predominate over residues Ala1668–Thr1681. The disordered stretch occupies residues Ala1668–Ser1695. Residues Val1693 to Tyr1770 enclose the Carrier domain. Position 1730 is an O-(pantetheine 4'-phosphoryl)serine (Ser1730).

The catalysed reaction is holo-[ACP] + 8 malonyl-CoA + 8 H(+) = atrochrysone carboxyl-[ACP] + 8 CO2 + 8 CoA + 2 H2O. It participates in secondary metabolite biosynthesis. Functionally, non-reducing polyketide synthase; part of the gene cluster that mediates the biosynthesis of geodin, an intermediate in the biosynthesis of other natural products. The pathway begins with the synthesis of atrochrysone thioester by the polyketide synthase (PKS) gedC. The atrochrysone carboxyl ACP thioesterase gedB then breaks the thioester bond and releases the atrochrysone carboxylic acid from gedC. The atrochrysone carboxylic acid is then converted to atrochrysone which is further transformed into emodinanthrone. The next step is performed by the emodinanthrone oxygenase gedH that catalyzes the oxidation of emodinanthrone to emodin. Emodin O-methyltransferase encoded probably by gedA then catalyzes methylation of the 8-hydroxy group of emodin to form questin. Ring cleavage of questin by questin oxidase gedK leads to desmethylsulochrin via several intermediates including questin epoxide. Another methylation step probably catalyzed by methyltransferase gedG leads to the formation of sulochrin which is further converted to dihydrogeodin by the sulochrin halogenase gedL. Finally, the dihydrogeodin oxidase gedJ catalyzes the stereospecific phenol oxidative coupling reaction converting dihydrogeodin to geodin. This Aspergillus terreus (strain NIH 2624 / FGSC A1156) protein is Atrochrysone carboxylic acid synthase.